Reading from the N-terminus, the 562-residue chain is Protein wntless (562 aa).

Residues 1–13 (MSGTILENLSGRK) are Cytoplasmic-facing. A helical membrane pass occupies residues 14–34 (LSILVGSLLLCQVLCFLLGGL). The Lumenal portion of the chain corresponds to 35 to 239 (YAPVPAGHTN…AIHQNGGFTH (205 aa)). The N-linked (GlcNAc...) asparagine glycan is linked to asparagine 58. Residues 240–260 (VWLMLKTLLFPFVVGIMVWFW) form a helical membrane-spanning segment. The Cytoplasmic portion of the chain corresponds to 261–270 (RRVHLLQRSP). A helical membrane pass occupies residues 271–291 (ALLEYMLLYLGGALTFLNLPL). Topologically, residues 292-311 (EYLSLTIEMPYMLLLSDIRQ) are lumenal. The helical transmembrane segment at 312–332 (GIFYAMLLSFWLVFAGEHMLI) threads the bilayer. Residues 333 to 344 (QDSSNKSTIRSR) lie on the Cytoplasmic side of the membrane. A helical membrane pass occupies residues 345–365 (YWKHLSAVVVGCISLFVFDIS). Residues 366 to 386 (ERGVQLRNPFYSIWTTPLGAK) are Lumenal-facing. A helical transmembrane segment spans residues 387 to 407 (VAMSFILLAGVSAAVYFLFLC). Over 408–441 (YMISKVFKNIGDKRTSLPSMSQARRLHYEGLIYR) the chain is Cytoplasmic. The helical transmembrane segment at 442-462 (FKFLMLATLLCAALTVTGFIM) threads the bilayer. Topologically, residues 463 to 482 (GQMAEGQWKWNDDVEIQLTS) are lumenal. A helical transmembrane segment spans residues 483–503 (AFLTGVYGMWNIYIFALLILY). The Cytoplasmic segment spans residues 504–562 (APSHKQWPTMHHSDETTQSNENIVASAASEEIEFSNLPSDSNPSEISSLTSFTRKVAFE). The disordered stretch occupies residues 538–562 (SNLPSDSNPSEISSLTSFTRKVAFE). Over residues 539–556 (NLPSDSNPSEISSLTSFT) the composition is skewed to polar residues.

This sequence belongs to the wntless family. As to quaternary structure, interacts with wg; in the Golgi. Interacts with Vps35, a component of the retromer complex; wls stability is regulated by Vps35.

It is found in the presynaptic cell membrane. Its subcellular location is the postsynaptic cell membrane. The protein resides in the cell membrane. The protein localises to the endoplasmic reticulum membrane. It localises to the endosome membrane. It is found in the golgi apparatus membrane. Its function is as follows. A segment polarity gene required for wingless (wg)-dependent patterning processes, acting in both wg-sending cells and wg-target cells. In non-neuronal cells wls directs wg secretion. The wls traffic loop encompasses the Golgi, the cell surface, an endocytic compartment and a retrograde route leading back to the Golgi, and involves clathrin-mediated endocytosis and the retromer complex (a conserved protein complex consisting of Vps35 and Vps26). In neuronal cells (the larval motorneuron NMJ), the wg signal moves across the synapse via the release of wls-containing exosome-like vesicles. Postsynaptic wls is required for the trafficking of fz2 through the fz2-interacting protein Grip. This is Protein wntless from Drosophila pseudoobscura pseudoobscura (Fruit fly).